We begin with the raw amino-acid sequence, 417 residues long: Serpin H1 (417 aa).

The signal sequence occupies residues 1–17 (MRSLLLGTLCLLAVALA). At Lys93 the chain carries N6-succinyllysine. Asn119 and Asn124 each carry an N-linked (GlcNAc...) asparagine glycan. At Ser140 the chain carries Phosphoserine. Position 206 is an N6-acetyllysine (Lys206). N6-succinyllysine is present on Lys295. Lys318 bears the N6-acetyllysine mark. Asn394 carries N-linked (GlcNAc...) asparagine glycosylation. Residues 414–417 (RDEL) carry the Prevents secretion from ER motif.

Belongs to the serpin family.

The protein localises to the endoplasmic reticulum lumen. Functionally, binds specifically to collagen. Could be involved as a chaperone in the biosynthetic pathway of collagen. In Rattus norvegicus (Rat), this protein is Serpin H1 (Serpinh1).